The primary structure comprises 244 residues: uncharacterized protein (244 aa).

Positions 1 to 18 (MQFSVLCKFLLLVTAVMA) are cleaved as a signal peptide. Over 19 to 223 (QTEYTPGFTT…TTIPSSAVHY (205 aa)) the chain is Lumenal. Composition is skewed to low complexity over residues 55–65 (ETSTHSVTSTN) and 75–128 (TSHN…TTHV). Residues 55-128 (ETSTHSVTST…TTVVPPTTHV (74 aa)) form a disordered region. The chain crosses the membrane as a helical span at residues 224 to 244 (ASPSGLLALVVMLISAFAFLA).

It is found in the endoplasmic reticulum membrane. This is an uncharacterized protein from Schizosaccharomyces pombe (strain 972 / ATCC 24843) (Fission yeast).